The sequence spans 393 residues: S-adenosylmethionine synthase 1 (393 aa).

Glutamate 9 contributes to the Mg(2+) binding site. Histidine 15 is a binding site for ATP. Glutamate 43 lines the K(+) pocket. Positions 56 and 99 each coordinate L-methionine. Residues 167 to 169, 235 to 238, aspartate 246, 252 to 253, alanine 269, lysine 273, and lysine 277 each bind ATP; these read DGK, SGRF, and RK. Aspartate 246 contacts L-methionine. An L-methionine-binding site is contributed by lysine 277.

Belongs to the AdoMet synthase family. In terms of assembly, homotetramer. The cofactor is Mn(2+). Mg(2+) is required as a cofactor. Requires Co(2+) as cofactor. It depends on K(+) as a cofactor. NH4(+) serves as cofactor. As to expression, mostly expressed in roots, and, to a lower extent, in hypocotyls and cotyledons.

The protein localises to the cytoplasm. It catalyses the reaction L-methionine + ATP + H2O = S-adenosyl-L-methionine + phosphate + diphosphate. Its pathway is amino-acid biosynthesis; S-adenosyl-L-methionine biosynthesis; S-adenosyl-L-methionine from L-methionine: step 1/1. With respect to regulation, inhibited by products of SAMS reaction (SAM, Pi, PPi), substrate analogs (cycloleucine and ethionine), and alternative nucleotides (GTP, CTP and ADP). Strongly repressed by PPPi. Functionally, catalyzes the formation of S-adenosylmethionine from methionine and ATP. The reaction comprises two steps that are both catalyzed by the same enzyme: formation of S-adenosylmethionine (AdoMet) and triphosphate, and subsequent hydrolysis of the triphosphate. This Catharanthus roseus (Madagascar periwinkle) protein is S-adenosylmethionine synthase 1 (SAMS1).